Reading from the N-terminus, the 524-residue chain is Cytochrome P450 52A6 (524 aa).

Residues 17–34 form a helical membrane-spanning segment; that stretch reads WYTVITLAALVFLISSNI. Cys472 provides a ligand contact to heme.

The protein belongs to the cytochrome P450 family. Heme serves as cofactor.

It is found in the membrane. Together with an NADPH cytochrome P450 the enzyme system catalyzes the terminal hydroxylation as the first step in the assimilation of alkanes and fatty acids. Preferentially hydroxylates hexadecane. The polypeptide is Cytochrome P450 52A6 (CYP52A6) (Candida tropicalis (Yeast)).